A 123-amino-acid chain; its full sequence is Small ribosomal subunit protein uS12cz/uS12cy (123 aa).

It belongs to the universal ribosomal protein uS12 family. In terms of assembly, part of the 30S ribosomal subunit.

The protein resides in the plastid. It is found in the chloroplast. Functionally, with S4 and S5 plays an important role in translational accuracy. Located at the interface of the 30S and 50S subunits. The chain is Small ribosomal subunit protein uS12cz/uS12cy (rps12-A) from Angiopteris evecta (Mule's foot fern).